A 268-amino-acid chain; its full sequence is Tryptophan synthase alpha chain (268 aa).

Active-site proton acceptor residues include Glu-49 and Asp-60.

This sequence belongs to the TrpA family. Tetramer of two alpha and two beta chains.

It carries out the reaction (1S,2R)-1-C-(indol-3-yl)glycerol 3-phosphate + L-serine = D-glyceraldehyde 3-phosphate + L-tryptophan + H2O. Its pathway is amino-acid biosynthesis; L-tryptophan biosynthesis; L-tryptophan from chorismate: step 5/5. Functionally, the alpha subunit is responsible for the aldol cleavage of indoleglycerol phosphate to indole and glyceraldehyde 3-phosphate. This is Tryptophan synthase alpha chain from Xylella fastidiosa (strain 9a5c).